The sequence spans 378 residues: Chloroplast stem-loop binding protein of 41 kDa b, chloroplastic (378 aa).

The transit peptide at 1–50 directs the protein to the chloroplast; that stretch reads MAKMMMLQQHQPSFSLLTSSLSDFNGAKLHLQVQYKRKVHQPKGALYVSA. A Phosphoserine modification is found at Ser240.

Belongs to the NAD(P)-dependent epimerase/dehydratase family. Component of a complex made of CSP41A, CSP41B, ribosomes, and the plastid-encoded RNA polymerase. Interacts with CSP41A. Binds DNA when in complex with PRIN2. As to expression, highly expressed in seedlings, particularly in photosynthetically active organs. Mostly expressed in young and mature leaves, and, to a lower extent, in flowers. Low expression in etiolated seedlings compared to green seedlings.

The protein localises to the plastid. It localises to the chloroplast. The protein resides in the plastoglobule. It is found in the cytoplasm. Binds and cleaves RNA, particularly in stem-loops. Associates with pre-ribosomal particles in chloroplasts, and participates in chloroplast ribosomal RNA metabolism, probably during the final steps of 23S rRNA maturation. May enhance transcription by the plastid-encoded polymerase and translation in plastid via the stabilization of ribosome assembly intermediates. Required for chloroplast integrity. Involved in the regulation of the circadian system. Involved in the regulation of heteroglycans and monosaccharide mobilization. Required for full expression of genes transcribed by the plastid-encoded RNA polymerase (PEP). Essential for embryo development. The chain is Chloroplast stem-loop binding protein of 41 kDa b, chloroplastic (CSP41B) from Arabidopsis thaliana (Mouse-ear cress).